Here is a 270-residue protein sequence, read N- to C-terminus: Formamidopyrimidine-DNA glycosylase (270 aa).

The Schiff-base intermediate with DNA role is filled by proline 2. The active-site Proton donor is glutamate 3. Lysine 57 functions as the Proton donor; for beta-elimination activity in the catalytic mechanism. Residues histidine 90, arginine 109, and lysine 150 each coordinate DNA. The FPG-type zinc-finger motif lies at 235-269 (QIYGKKGCPCPKCGQKIESFTVGQRNSYVCLHCQK). The active-site Proton donor; for delta-elimination activity is arginine 259.

It belongs to the FPG family. As to quaternary structure, monomer. Zn(2+) is required as a cofactor.

It catalyses the reaction Hydrolysis of DNA containing ring-opened 7-methylguanine residues, releasing 2,6-diamino-4-hydroxy-5-(N-methyl)formamidopyrimidine.. The enzyme catalyses 2'-deoxyribonucleotide-(2'-deoxyribose 5'-phosphate)-2'-deoxyribonucleotide-DNA = a 3'-end 2'-deoxyribonucleotide-(2,3-dehydro-2,3-deoxyribose 5'-phosphate)-DNA + a 5'-end 5'-phospho-2'-deoxyribonucleoside-DNA + H(+). Involved in base excision repair of DNA damaged by oxidation or by mutagenic agents. Acts as a DNA glycosylase that recognizes and removes damaged bases. Has a preference for oxidized purines, such as 7,8-dihydro-8-oxoguanine (8-oxoG). Has AP (apurinic/apyrimidinic) lyase activity and introduces nicks in the DNA strand. Cleaves the DNA backbone by beta-delta elimination to generate a single-strand break at the site of the removed base with both 3'- and 5'-phosphates. The chain is Formamidopyrimidine-DNA glycosylase from Actinobacillus succinogenes (strain ATCC 55618 / DSM 22257 / CCUG 43843 / 130Z).